A 111-amino-acid chain; its full sequence is Flagellar hook-basal body complex protein FliE (111 aa).

Belongs to the FliE family.

It localises to the bacterial flagellum basal body. In Clostridium acetobutylicum (strain ATCC 824 / DSM 792 / JCM 1419 / IAM 19013 / LMG 5710 / NBRC 13948 / NRRL B-527 / VKM B-1787 / 2291 / W), this protein is Flagellar hook-basal body complex protein FliE.